The primary structure comprises 293 residues: Cytidine deaminase (293 aa).

2 CMP/dCMP-type deaminase domains span residues Asp47 to Ala166 and Val186 to Val293. Position 88–90 (Asn88–Glu90) interacts with substrate. Residue His101 participates in Zn(2+) binding. Glu103 serves as the catalytic Proton donor. Zn(2+) contacts are provided by Cys128 and Cys131.

It belongs to the cytidine and deoxycytidylate deaminase family. In terms of assembly, homodimer. Zn(2+) is required as a cofactor.

The catalysed reaction is cytidine + H2O + H(+) = uridine + NH4(+). It catalyses the reaction 2'-deoxycytidine + H2O + H(+) = 2'-deoxyuridine + NH4(+). In terms of biological role, this enzyme scavenges exogenous and endogenous cytidine and 2'-deoxycytidine for UMP synthesis. The polypeptide is Cytidine deaminase (Aeromonas hydrophila subsp. hydrophila (strain ATCC 7966 / DSM 30187 / BCRC 13018 / CCUG 14551 / JCM 1027 / KCTC 2358 / NCIMB 9240 / NCTC 8049)).